Reading from the N-terminus, the 194-residue chain is Cathelicidin-related peptide isoform 3 (194 aa).

Positions 1–22 (MQGFFWKTWLVLAVCGTPASLA) are cleaved as a signal peptide. Residues 23–164 (HRPLSYGEAL…DQPKRVKRFK (142 aa)) constitute a propeptide that is removed on maturation. 2 cysteine pairs are disulfide-bonded: C79–C90 and C101–C118. Over residues 125–145 (EEEEEEEEEEQKAEAENDEEV) the composition is skewed to acidic residues. The interval 125 to 156 (EEEEEEEEEEQKAEAENDEEVEKEKGDEEKDQ) is disordered. Basic and acidic residues predominate over residues 146–156 (EKEKGDEEKDQ).

It belongs to the cathelicidin family. In terms of tissue distribution, expressed by the venom gland.

The protein resides in the secreted. The protein localises to the target cell membrane. Its function is as follows. Potent antimicrobial peptide against Gram-negative and Gram-positive bacteria. Adopts an amphipathic alpha helical conformation, that may allow to partition into the target membrane. Low hemolytic activities have been observed on mammalian cells. The protein is Cathelicidin-related peptide isoform 3 of Crotalus durissus cascavella (Northeastern Brazilian rattlesnake).